The primary structure comprises 347 residues: Heme A synthase (347 aa).

The next 8 membrane-spanning stretches (helical) occupy residues 14-34 (VKIW…IGGI), 96-116 (FHRL…LYFM), 129-149 (FILI…MVKS), 162-182 (LAMH…HFLL), 199-219 (VFYI…LVAG), 260-280 (FIHE…LLVL), 287-307 (MYLL…TFIY), and 311-331 (IILA…SIYL). Residue H262 participates in heme binding. Position 317 (H317) interacts with heme.

This sequence belongs to the COX15/CtaA family. Type 2 subfamily. In terms of assembly, interacts with CtaB. It depends on heme b as a cofactor.

The protein localises to the cell membrane. The enzyme catalyses Fe(II)-heme o + 2 A + H2O = Fe(II)-heme a + 2 AH2. Its pathway is porphyrin-containing compound metabolism; heme A biosynthesis; heme A from heme O: step 1/1. Catalyzes the conversion of heme O to heme A by two successive hydroxylations of the methyl group at C8. The first hydroxylation forms heme I, the second hydroxylation results in an unstable dihydroxymethyl group, which spontaneously dehydrates, resulting in the formyl group of heme A. This is Heme A synthase from Ehrlichia ruminantium (strain Gardel).